The primary structure comprises 259 residues: Protein YIF1B (259 aa).

Met-1 bears the N-acetylmethionine mark. Residues 1 to 61 (MHATGLAAPA…QPSPGSLGYP (61 aa)) are disordered. Over 9–153 (PAGTPRLRKW…APRFDINAPD (145 aa)) the chain is Cytoplasmic. At Thr-12 the chain carries Phosphothreonine. Positions 14–24 (RLRKWPSKRRV) are enriched in basic residues. Ser-64 is modified (phosphoserine). A helical transmembrane segment spans residues 154 to 174 (LYIPAMAFITYILVAGLALGT). Topologically, residues 175–186 (QDRMIGGVLTGL) are extracellular. The chain crosses the membrane as a helical span at residues 187–207 (LFGKIGYYLVLAWCCVSIFVF). Topologically, residues 208 to 237 (MIRTLRLKILAQAAAEGVPVRGARNQLRMY) are cytoplasmic. A helical membrane pass occupies residues 238–258 (LTMAVAAAQPVLMYWLTFHLV). A topological domain (extracellular) is located at residue Arg-259.

Belongs to the YIF1 family. As to quaternary structure, interacts with HTR1A (via C-terminus). Interacts with ABCB9 (via TMD0); this interaction allows (but is not essential) the ER-to-Golgi trafficking and strongly depends on a salt bridge within TMD0. In terms of tissue distribution, highly expressed in brain. Expressed in heart, kidney, and lung and lower levels in spleen, muscle, and intestine (at protein level). Expressed in serotoninergic neurons (at protein level).

It localises to the endoplasmic reticulum membrane. It is found in the golgi apparatus membrane. Its subcellular location is the endoplasmic reticulum-Golgi intermediate compartment membrane. Functionally, functions in endoplasmic reticulum to Golgi vesicle-mediated transport and regulates the proper organization of the endoplasmic reticulum and the Golgi. Plays a key role in targeting to neuronal dendrites receptors such as HTR1A. Plays also a role in primary cilium and sperm flagellum assembly probably through protein transport to these compartments. The protein is Protein YIF1B of Rattus norvegicus (Rat).